We begin with the raw amino-acid sequence, 380 residues long: GDSL esterase/lipase At3g26430 (380 aa).

A signal peptide spans 1 to 25; that stretch reads METNLLLVKCVLLASCLIHPRACSP. Catalysis depends on Ser38, which acts as the Nucleophile. 3 N-linked (GlcNAc...) asparagine glycosylation sites follow: Asn97, Asn115, and Asn183. Catalysis depends on residues Asp346 and His349.

It belongs to the 'GDSL' lipolytic enzyme family.

Its subcellular location is the secreted. It catalyses the reaction hexadecanoate ester + H2O = an aliphatic alcohol + hexadecanoate + H(+). The enzyme catalyses a butanoate ester + H2O = an aliphatic alcohol + butanoate + H(+). Its activity is regulated as follows. Lipase activity is inhibited by phenylmethylsulfonyl fluoride (PMSF), but not neostigmine bromide (NB). Its function is as follows. Lipase that can hydrolyze p-nitrophenyl butyrate and p-nitrophenyl palmitate in vitro. Possesses low activity against p-nitrophenyl acetate. Substrate preference is p-nitrophenyl palmitate &gt; p-nitrophenyl butyrate &gt;&gt; p-nitrophenyl acetate. Lacks cholinesterase activity. The sequence is that of GDSL esterase/lipase At3g26430 from Arabidopsis thaliana (Mouse-ear cress).